Consider the following 268-residue polypeptide: NADH-quinone oxidoreductase subunit B 1 (268 aa).

The [4Fe-4S] cluster site is built by Cys-42, Cys-43, Cys-108, and Cys-138.

It belongs to the complex I 20 kDa subunit family. In terms of assembly, NDH-1 is composed of 14 different subunits. Subunits NuoB, C, D, E, F, and G constitute the peripheral sector of the complex. [4Fe-4S] cluster serves as cofactor.

It is found in the cell membrane. The enzyme catalyses a quinone + NADH + 5 H(+)(in) = a quinol + NAD(+) + 4 H(+)(out). In terms of biological role, NDH-1 shuttles electrons from NADH, via FMN and iron-sulfur (Fe-S) centers, to quinones in the respiratory chain. The immediate electron acceptor for the enzyme in this species is believed to be ubiquinone. Couples the redox reaction to proton translocation (for every two electrons transferred, four hydrogen ions are translocated across the cytoplasmic membrane), and thus conserves the redox energy in a proton gradient. The chain is NADH-quinone oxidoreductase subunit B 1 from Roseiflexus sp. (strain RS-1).